Here is a 1755-residue protein sequence, read N- to C-terminus: MESQQLSNYPHISHGSACASVTSKEVHTNQDPLDVSASKIQEYDKASTKANSQQTTTPASSAVPENPHHASPQPASVPPPQNGPYPQQCMMTQNQANPSGWSFYGHPSMIPYTPYQMSPMYFPPGPQSQFPQYPSSVGTPLSTPSPESGNTFTDSSSADSDMTSTKKYVRPPPMLTSPNDFPNWVKTYIKFLQNSNLGGIIPTVNGKPVRQITDDELTFLYNTFQIFAPSQFLPTWVKDILSVDYTDIMKILSKSIEKMQSDTQEANDIVTLANLQYNGSTPADAFETKVTNIIDRLNNNGIHINNKVACQLIMRGLSGEYKFLRYTRHRHLNMTVAELFLDIHAIYEEQQGSRNSKPNYRRNPSDEKNDSRSYTNTTKPKVIARNPQKTNNSKSKTARAHNVSTSNNSPSTDNDSISKSTTEPIQLNNKHDLHLGQKLTESTVNHTNHSDDELPGHLLLDSGASRTLIRSAHHIHSASSNPDINVVDAQKRNIPINAIGDLQFHFQDNTKTSIKVLHTPNIAYDLLSLNELAAVDITACFTKNVLERSDGTVLAPIVKYGDFYWVSKKYLLPSNISVPTINNVHTSESTRKYPYPFIHRMLAHANAQTIRYSLKNNTITYFNESDVDWSSAIDYQCPDCLIGKSTKHRHIKGSRLKYQNSYEPFQYLHTDIFGPVHNLPKSAPSYFISFTDETTKFRWVYPLHDRREDSILDVFTTILAFIKNQFQASVLVIQMDRGSEYTNRTLHKFLEKNGITPCYTTTADSRAHGVAERLNRTLLDDCRTQLQCSGLPNHLWFSAIEFSTIVRNSLASPKSKKSARQHAGLAGLDISTLLPFGQPVIVNDHNPNSKIHPRGIPGYALHPSRNSYGYIIYLPSLKKTVDTTNYVILQGKESRLDQFNYDALTFDEDLNRLTASYHSFIASNEIQQSNDLNIESDHDFQSDIELHPEQLRNVLSKAVSPTDSTPPSTHTEDSKRVSKTNIRAPREVDPNISESNILPSKKRSSTPQISDIESTGSGGMHRLDVPLLAPMSQSNTHESSHASKSKDFRHSDSYSDNETNHTNVPISSTGGTNNKTVPQTSEQETEKRIIHRSPSIDTSSSESNSLHHVVPIKTSDTCPKENTEESIIADLPLPDLPPEPPTELSDSFKELPPINSHQTNSSLGGIGDSNAYTTINSKKRSLEDNETEIKVSRDTWNTKNMRSLEPPRSKKRIHLIAAVKAVKSIKPIRTTLRYDEAITYNKDIKEKEKYIQAYHKEVNQLLKMKTWDTDRYYDRKEIDPKRVINSMFIFNRKRDGTHKARFVARGDIQHPDTYDPGMQSNTVHHYALMTSLSLALDNNYYITQLDISSAYLYADIKEELYIRPPPHLGMNDKLIRLKKSLYGLKQSGANWYETIKSYLIKQCGMEEVRGWSCVFKNSQVTICLFVDDMILFSKDLNANKKIITTLKKQYDTKIINLGESDNEIQYDILGLEIKYQRGKYMKLGMENSLTEKIPKLNVPLNPKGRKLSAPGQPGLYIDQQELELEEDDYKMKVHEMQKLIGLASYVGYKFRFDLLYYINTLAQHILFPSKQVLDMTYELIQFIWNTRDKQLIWHKSKPVKPTNKLVVISDASYGNQPYYKSQIGNIYLLNGKVIGGKSTKASLTCTSTTEAEIHAISESVPLLNNLSHLVQELNKKPITKGLLTDSKSTISIIISNNEEKFRNRFFGTKAMRLRDEVSGNHLHVCYIETKKNIADVMTKPLPIKTFKLLTNKWIH.

3 stretches are compositionally biased toward polar residues: residues 1–10 (MESQQLSNYP), 48–60 (TKAN…TPAS), and 127–152 (QSQF…GNTF). Disordered regions lie at residues 1–93 (MESQ…MMTQ), 126–173 (PQSQ…RPPP), and 352–421 (GSRN…SKST). A compositionally biased stretch (low complexity) spans 153-165 (TDSSSADSDMTST). Residues 299–401 (NNGIHINNKV…NSKSKTARAH (103 aa)) form an RNA-binding region. The span at 402–418 (NVSTSNNSPSTDNDSIS) shows a compositional bias: low complexity. Residue Asp-461 is the For protease activity; shared with dimeric partner of the active site. The integrase-type zinc finger-like stretch occupies residues 583 to 640 (NVHTSESTRKYPYPFIHRMLAHANAQTIRYSLKNNTITYFNESDVDWSSAIDYQCPDC). In terms of domain architecture, Integrase catalytic spans 660–835 (NSYEPFQYLH…AGLDISTLLP (176 aa)). Mg(2+) is bound by residues Asp-671 and Asp-736. Residues 958–1170 (AVSPTDSTPP…SSLGGIGDSN (213 aa)) form a disordered region. Residues 960–969 (SPTDSTPPST) show a composition bias toward low complexity. Positions 1005–1015 (STPQISDIEST) are enriched in polar residues. The span at 1038-1053 (ESSHASKSKDFRHSDS) shows a compositional bias: basic and acidic residues. 2 stretches are compositionally biased toward polar residues: residues 1054 to 1082 (YSDN…QTSE) and 1095 to 1106 (SIDTSSSESNSL). The Bipartite nuclear localization signal motif lies at 1178 to 1212 (KKRSLEDNETEIKVSRDTWNTKNMRSLEPPRSKKR). The 139-residue stretch at 1338–1476 (NNYYITQLDI…DILGLEIKYQ (139 aa)) folds into the Reverse transcriptase Ty1/copia-type domain. Positions 1346, 1427, 1428, 1610, 1652, and 1685 each coordinate Mg(2+). The RNase H Ty1/copia-type domain maps to 1610–1752 (DASYGNQPYY…IKTFKLLTNK (143 aa)).

The capsid protein forms a homotrimer, from which the VLPs are assembled. The protease is a homodimer, whose active site consists of two apposed aspartic acid residues. Post-translationally, initially, virus-like particles (VLPs) are composed of the structural unprocessed proteins Gag and Gag-Pol, and also contain the host initiator methionine tRNA (tRNA(i)-Met) which serves as a primer for minus-strand DNA synthesis, and a dimer of genomic Ty RNA. Processing of the polyproteins occurs within the particle and proceeds by an ordered pathway, called maturation. First, the protease (PR) is released by autocatalytic cleavage of the Gag-Pol polyprotein yielding capsid protein p45 and a Pol-p154 precursor protein. This cleavage is a prerequisite for subsequent processing of Pol-p154 at the remaining sites to release the mature structural and catalytic proteins. Maturation takes place prior to the RT reaction and is required to produce transposition-competent VLPs.

The protein resides in the cytoplasm. The protein localises to the nucleus. It carries out the reaction DNA(n) + a 2'-deoxyribonucleoside 5'-triphosphate = DNA(n+1) + diphosphate. The catalysed reaction is Endonucleolytic cleavage to 5'-phosphomonoester.. In terms of biological role, capsid protein (CA) is the structural component of the virus-like particle (VLP), forming the shell that encapsulates the retrotransposons dimeric RNA genome. The particles are assembled from trimer-clustered units and there are holes in the capsid shells that allow for the diffusion of macromolecules. CA also has nucleocapsid-like chaperone activity, promoting primer tRNA(i)-Met annealing to the multipartite primer-binding site (PBS), dimerization of Ty1 RNA and initiation of reverse transcription. Functionally, the aspartyl protease (PR) mediates the proteolytic cleavages of the Gag and Gag-Pol polyproteins after assembly of the VLP. Reverse transcriptase/ribonuclease H (RT) is a multifunctional enzyme that catalyzes the conversion of the retro-elements RNA genome into dsDNA within the VLP. The enzyme displays a DNA polymerase activity that can copy either DNA or RNA templates, and a ribonuclease H (RNase H) activity that cleaves the RNA strand of RNA-DNA heteroduplexes during plus-strand synthesis and hydrolyzes RNA primers. The conversion leads to a linear dsDNA copy of the retrotransposon that includes long terminal repeats (LTRs) at both ends. Its function is as follows. Integrase (IN) targets the VLP to the nucleus, where a subparticle preintegration complex (PIC) containing at least integrase and the newly synthesized dsDNA copy of the retrotransposon must transit the nuclear membrane. Once in the nucleus, integrase performs the integration of the dsDNA into the host genome. In Saccharomyces cerevisiae (strain ATCC 204508 / S288c) (Baker's yeast), this protein is Transposon Ty1-ER2 Gag-Pol polyprotein (TY1B-ER2).